A 1583-amino-acid polypeptide reads, in one-letter code: Pentafunctional AROM polypeptide (1583 aa).

Positions 1-384 (MSNPTKISIL…YETRASVVAN (384 aa)) are 3-dehydroquinate synthase. NAD(+) contacts are provided by residues 44–46 (DTN), 81–84 (EVSK), 114–116 (GGV), and aspartate 119. Arginine 130 lines the 7-phospho-2-dehydro-3-deoxy-D-arabino-heptonate pocket. 139 to 140 (TT) is a binding site for NAD(+). Residues aspartate 146 and lysine 152 each contribute to the 7-phospho-2-dehydro-3-deoxy-D-arabino-heptonate site. Lysine 161 is a binding site for NAD(+). Asparagine 162 contributes to the 7-phospho-2-dehydro-3-deoxy-D-arabino-heptonate binding site. NAD(+)-binding positions include 179–182 (FLET) and asparagine 190. Glutamate 194 provides a ligand contact to Zn(2+). Residues 194–197 (EVIK) and lysine 250 each bind 7-phospho-2-dehydro-3-deoxy-D-arabino-heptonate. Glutamate 260 acts as the Proton acceptor; for 3-dehydroquinate synthase activity in catalysis. Residues 264-268 (RNLLN) and histidine 271 contribute to the 7-phospho-2-dehydro-3-deoxy-D-arabino-heptonate site. Histidine 271 provides a ligand contact to Zn(2+). The active-site Proton acceptor; for 3-dehydroquinate synthase activity is the histidine 275. 7-phospho-2-dehydro-3-deoxy-D-arabino-heptonate-binding residues include histidine 287 and lysine 356. Histidine 287 is a binding site for Zn(2+). Residues 397-842 (VHPGVAQSSN…WDTLRQLFKV (446 aa)) are EPSP synthase. Cysteine 824 functions as the For EPSP synthase activity in the catalytic mechanism. Residues 863 to 1055 (NASIYIIGMR…KEKEHSFFAS (193 aa)) form a shikimate kinase region. 870-877 (GMRGAGKS) lines the ATP pocket. The interval 1056–1276 (LTLPDLREAG…AAPGQLSATE (221 aa)) is 3-dehydroquinase. The Proton acceptor; for 3-dehydroquinate dehydratase activity role is filled by histidine 1179. Lysine 1207 functions as the Schiff-base intermediate with substrate; for 3-dehydroquinate dehydratase activity in the catalytic mechanism. The shikimate dehydrogenase stretch occupies residues 1289-1583 (PKKFAIFGSP…SARACSSPLI (295 aa)).

It in the N-terminal section; belongs to the sugar phosphate cyclases superfamily. Dehydroquinate synthase family. In the 2nd section; belongs to the EPSP synthase family. The protein in the 3rd section; belongs to the shikimate kinase family. This sequence in the 4th section; belongs to the type-I 3-dehydroquinase family. It in the C-terminal section; belongs to the shikimate dehydrogenase family. Homodimer. Requires Zn(2+) as cofactor.

The protein resides in the cytoplasm. The catalysed reaction is 7-phospho-2-dehydro-3-deoxy-D-arabino-heptonate = 3-dehydroquinate + phosphate. It carries out the reaction 3-dehydroquinate = 3-dehydroshikimate + H2O. It catalyses the reaction shikimate + NADP(+) = 3-dehydroshikimate + NADPH + H(+). The enzyme catalyses shikimate + ATP = 3-phosphoshikimate + ADP + H(+). The catalysed reaction is 3-phosphoshikimate + phosphoenolpyruvate = 5-O-(1-carboxyvinyl)-3-phosphoshikimate + phosphate. It functions in the pathway metabolic intermediate biosynthesis; chorismate biosynthesis; chorismate from D-erythrose 4-phosphate and phosphoenolpyruvate: step 2/7. The protein operates within metabolic intermediate biosynthesis; chorismate biosynthesis; chorismate from D-erythrose 4-phosphate and phosphoenolpyruvate: step 3/7. It participates in metabolic intermediate biosynthesis; chorismate biosynthesis; chorismate from D-erythrose 4-phosphate and phosphoenolpyruvate: step 4/7. Its pathway is metabolic intermediate biosynthesis; chorismate biosynthesis; chorismate from D-erythrose 4-phosphate and phosphoenolpyruvate: step 5/7. It functions in the pathway metabolic intermediate biosynthesis; chorismate biosynthesis; chorismate from D-erythrose 4-phosphate and phosphoenolpyruvate: step 6/7. The AROM polypeptide catalyzes 5 consecutive enzymatic reactions in prechorismate polyaromatic amino acid biosynthesis. The sequence is that of Pentafunctional AROM polypeptide (aromA) from Emericella nidulans (strain FGSC A4 / ATCC 38163 / CBS 112.46 / NRRL 194 / M139) (Aspergillus nidulans).